Here is a 203-residue protein sequence, read N- to C-terminus: Putative zinc finger protein 876 (203 aa).

4 consecutive C2H2-type zinc fingers follow at residues 63-85, 91-113, 119-141, and 147-169; these read YTCE…KNIH, YKCE…KRIH, YKCE…KKIH, and YKCK…TNIH. The C2H2-type 5; degenerate zinc finger occupies 175-197; it reads YTCEECGKDFTWSSTLTVHQRIQ.

The protein belongs to the krueppel C2H2-type zinc-finger protein family.

Its subcellular location is the nucleus. In terms of biological role, may be involved in transcriptional regulation. This is Putative zinc finger protein 876 (ZNF876P) from Homo sapiens (Human).